Reading from the N-terminus, the 188-residue chain is Inosine triphosphate pyrophosphatase (188 aa).

12–17 (TGNKNK) provides a ligand contact to ITP. Glu-40 is a binding site for Mg(2+). Residues Lys-52, 68–69 (DT), Lys-85, 144–147 (FGWD), Lys-165, and 170–171 (HR) each bind ITP.

It belongs to the HAM1 NTPase family. As to quaternary structure, homodimer. Requires Mg(2+) as cofactor. It depends on Mn(2+) as a cofactor.

The protein resides in the cytoplasm. The protein localises to the nucleus. The catalysed reaction is ITP + H2O = IMP + diphosphate + H(+). It carries out the reaction dITP + H2O = dIMP + diphosphate + H(+). It catalyses the reaction XTP + H2O = XMP + diphosphate + H(+). Pyrophosphatase that hydrolyzes non-canonical purine nucleotides such as inosine triphosphate (ITP), deoxyinosine triphosphate (dITP) or xanthosine 5'-triphosphate (XTP) to their respective monophosphate derivatives. The enzyme does not distinguish between the deoxy- and ribose forms. Probably excludes non-canonical purines from RNA and DNA precursor pools, thus preventing their incorporation into RNA and DNA and avoiding chromosomal lesions. This is Inosine triphosphate pyrophosphatase from Phaeosphaeria nodorum (strain SN15 / ATCC MYA-4574 / FGSC 10173) (Glume blotch fungus).